The primary structure comprises 858 residues: Neural cell adhesion molecule 1 (858 aa).

An N-terminal signal peptide occupies residues 1–19; it reads MLQTKDLIWTLFFLGTAVS. Ig-like C2-type domains are found at residues 20 to 111, 116 to 205, 212 to 301, 308 to 413, and 416 to 501; these read LQVD…ATVN, QKLM…KDIQ, PTIQ…ATIH, PKIT…LEVQ, and PKLQ…ESLE. Residues 20–718 are Extracellular-facing; sequence LQVDIVPSQG…IPANGSPTSG (699 aa). 2 disulfide bridges follow: C41–C96 and C139–C189. N-linked (GlcNAc...) asparagine glycosylation occurs at N222. The cysteines at positions 235 and 287 are disulfide-linked. N315, N347, N433, N459, and N488 each carry an N-linked (GlcNAc...) asparagine glycan. C329 and C395 are joined by a disulfide. Cysteines 436 and 489 form a disulfide. 2 Fibronectin type-III domains span residues 509–608 and 611–706; these read TPSS…TQPV and EPSA…SAQP. P706 is lipidated: GPI-anchor amidated asparagine. The helical transmembrane segment at 719 to 739 threads the bilayer; that stretch reads LSTGAIVGILIVIFVLLLVVV. At 740-858 the chain is on the cytoplasmic side; that stretch reads DITCYFLNKC…TQTKENESKA (119 aa). I741 is lipidated: GPI-anchor amidated asparagine. Positions 766–858 are disordered; sequence GAKGKDMEEG…TQTKENESKA (93 aa). Composition is skewed to basic and acidic residues over residues 768–809 and 817–834; these read KGKD…HTEP and EPEKGPVEAKPECQETET. 2 positions are modified to phosphoserine: S780 and S784.

As to quaternary structure, (Microbial infection) Interacts with rabies virus glycoprotein. (Microbial infection) Interacts with Zika virus envelope protein E. In terms of assembly, interacts with MDK. Found in a complex with SLC39A6, SLC39A10 and with NCAM1; this complex controls NCAM1 phosphorylation and integration into focal adhesion complexes during epithelial-tomesenchymal transition. Interacts with synaptic plasticity regulator PANTS. Polysialylated at Asn-459 and Asn-488 by ST8SIA2 and ST8SIA4. Polysialylation modulates cell interactions by confering both attractive and repulsive properties that are highly regulated by ST8SIA2 and ST8SIA4. Polysialylation is formed on a-2,3-linked sialic acid of core glycans.

It is found in the cell membrane. The protein localises to the secreted. This protein is a cell adhesion molecule involved in neuron-neuron adhesion, neurite fasciculation, outgrowth of neurites, etc. Its function is as follows. (Microbial infection) Acts as a receptor for rabies virus. Functionally, (Microbial infection) Acts as a receptor for Zika virus. The protein is Neural cell adhesion molecule 1 of Homo sapiens (Human).